Here is a 197-residue protein sequence, read N- to C-terminus: MTNRDIVWHEASITKEEYQQKNKHKSSILWLTGLSGSGKSTIANAAARELFEQGYQVIVLDGDNIRHGLNKDLGFSDDDRKENIRRIGEVAKLFVQQGTIVITAFISPFREDRDQVRELVAEGEFNEIYVKCDLDICEKRDPKGLYKKARNGEIPFFTGIDSPYEEPKAPELVLDSGKCEREECTGRLVDFVKNSLA.

33 to 40 provides a ligand contact to ATP; the sequence is GLSGSGKS. Catalysis depends on Ser-107, which acts as the Phosphoserine intermediate.

The protein belongs to the APS kinase family.

The catalysed reaction is adenosine 5'-phosphosulfate + ATP = 3'-phosphoadenylyl sulfate + ADP + H(+). It functions in the pathway sulfur metabolism; hydrogen sulfide biosynthesis; sulfite from sulfate: step 2/3. Functionally, catalyzes the synthesis of activated sulfate. This chain is Adenylyl-sulfate kinase, found in Bacillus velezensis (strain DSM 23117 / BGSC 10A6 / LMG 26770 / FZB42) (Bacillus amyloliquefaciens subsp. plantarum).